The primary structure comprises 442 residues: D-serine dehydratase (442 aa).

Lysine 118 bears the N6-(pyridoxal phosphate)lysine mark.

The protein belongs to the serine/threonine dehydratase family. DsdA subfamily. Monomer. The cofactor is pyridoxal 5'-phosphate.

It catalyses the reaction D-serine = pyruvate + NH4(+). This chain is D-serine dehydratase, found in Escherichia coli O6:H1 (strain CFT073 / ATCC 700928 / UPEC).